The following is a 188-amino-acid chain: MTRMLIIGPPGAGKGTQAARISERLGVPAISTGDIFRANIKDQTELGREAQRYTDAGNLVPDSVTNEMVRDRLSHEDVSGGFLLDGYPRTVAQVEELDRILEANGVGLDVVLLLTADNDELVSRLLGRAQEQGRTDDTEDVIRHRLDVYDEQTAPVVGVYEDRGIVVRVDGLGSIDHVTERIMAALER.

11-16 lines the ATP pocket; it reads GAGKGT. An NMP region spans residues 31–60; sequence STGDIFRANIKDQTELGREAQRYTDAGNLV. AMP contacts are provided by residues Thr-32, Arg-37, 58–60, 86–89, and Gln-93; these read NLV and GYPR. Positions 127-137 are LID; it reads GRAQEQGRTDD. Arg-128 contributes to the ATP binding site. Arg-134 and Arg-145 together coordinate AMP. Position 173 (Gly-173) interacts with ATP.

The protein belongs to the adenylate kinase family. Monomer.

It is found in the cytoplasm. The catalysed reaction is AMP + ATP = 2 ADP. It participates in purine metabolism; AMP biosynthesis via salvage pathway; AMP from ADP: step 1/1. Its function is as follows. Catalyzes the reversible transfer of the terminal phosphate group between ATP and AMP. Plays an important role in cellular energy homeostasis and in adenine nucleotide metabolism. The chain is Adenylate kinase from Kocuria rhizophila (strain ATCC 9341 / DSM 348 / NBRC 103217 / DC2201).